The chain runs to 1287 residues: DENN domain-containing protein 5A (1287 aa).

Residues 57–259 (STTEGENFEQ…EVPLPPPGRS (203 aa)) form the uDENN domain. Phosphoserine is present on S193. The cDENN domain maps to 278–414 (ELPLFDFPVK…LEFVQEVSEI (137 aa)). In terms of domain architecture, dDENN spans 416–598 (MAFGVPPEGN…IMCHDDDDKD (183 aa)). The RUN 1 domain occupies 787–950 (VEENTLIASL…DYFCFTNVFT (164 aa)). The region spanning 954–1062 (IPYHILIVPS…DDGSLERVLV (109 aa)) is the PLAT domain. Position 1079 is a phosphothreonine (T1079). Phosphoserine occurs at positions 1085, 1087, and 1096. An RUN 2 domain is found at 1134-1280 (TLLLCGECGL…QEFNITLDTS (147 aa)).

It belongs to the RAB6IP1 family. Interacts with RAB6A bound to GTP. Expressed in developing brain and developing neurons.

It is found in the golgi apparatus membrane. Functionally, guanine nucleotide exchange factor (GEF) which may activate RAB6A and RAB39A and/or RAB39B. Promotes the exchange of GDP to GTP, converting inactive GDP-bound Rab proteins into their active GTP-bound form. Involved in the negative regulation of neurite outgrowth. In Rattus norvegicus (Rat), this protein is DENN domain-containing protein 5A (Dennd5a).